The sequence spans 93 residues: Parbolysin P5 (93 aa).

Cystine bridges form between C16–C37, C22–C33, and C47–C60.

Belongs to the worm cytolysin family. As to expression, localized within the skin and proboscis and are most readily isolated from body mucus secretions.

It is found in the secreted. In terms of biological role, cytolysin that shows hemolytic activity (on bovine erythrocytes, HC(50)=5.75 mg/ml). This hemolytic activity is completely inhibited by small unilamelar vesicles composed of PC/PG, PC/PI and PC/PS in 1:1 molar ratios (with at least 100 mg/ml concentration). The chain is Parbolysin P5 from Parborlasia corrugatus (Antarctic nemertean worm).